Here is a 468-residue protein sequence, read N- to C-terminus: Chromosomal replication initiator protein DnaA (468 aa).

Positions M1–S84 are domain I, interacts with DnaA modulators. The segment at S80 to Q106 is disordered. Positions S84–S131 are domain II. Positions N132–A348 are domain III, AAA+ region. ATP contacts are provided by G176, G178, K179, and T180. The domain IV, binds dsDNA stretch occupies residues N349–S468.

This sequence belongs to the DnaA family. In terms of assembly, oligomerizes as a right-handed, spiral filament on DNA at oriC.

The protein resides in the cytoplasm. In terms of biological role, plays an essential role in the initiation and regulation of chromosomal replication. ATP-DnaA binds to the origin of replication (oriC) to initiate formation of the DNA replication initiation complex once per cell cycle. Binds the DnaA box (a 9 base pair repeat at the origin) and separates the double-stranded (ds)DNA. Forms a right-handed helical filament on oriC DNA; dsDNA binds to the exterior of the filament while single-stranded (ss)DNA is stabiized in the filament's interior. The ATP-DnaA-oriC complex binds and stabilizes one strand of the AT-rich DNA unwinding element (DUE), permitting loading of DNA polymerase. After initiation quickly degrades to an ADP-DnaA complex that is not apt for DNA replication. Binds acidic phospholipids. This Vibrio parahaemolyticus serotype O3:K6 (strain RIMD 2210633) protein is Chromosomal replication initiator protein DnaA.